The sequence spans 1032 residues: Reticulon-3 (1032 aa).

Residues 1–24 are compositionally biased toward low complexity; the sequence is MAEPSAATQSHSISSSSFGAEPSA. Residues 1–61 form a disordered region; the sequence is MAEPSAATQS…SSSSSQPVSL (61 aa). N-acetylalanine is present on A2. Topologically, residues 2–863 are cytoplasmic; the sequence is AEPSAATQSH…KKTGFVFGTT (862 aa). S30 bears the Phosphoserine mark. Positions 32 to 61 are enriched in low complexity; it reads GACPALGTKSCSSSCADSFVSSSSSQPVSL. 6 positions are modified to phosphoserine: S229, S243, S246, S283, S316, and S453. A compositionally biased stretch (basic and acidic residues) spans 545–568; that stretch reads CEREEKTSKNFEELVSDSELHQDQ. The tract at residues 545–617 is disordered; sequence CEREEKTSKN…NPKLPSTVSP (73 aa). Over residues 605 to 617 the composition is skewed to polar residues; it reads TTENPKLPSTVSP. S649 and S650 each carry phosphoserine. Basic and acidic residues predominate over residues 696–715; that stretch reads NESGGSEIKDIGSKYSEQSK. The disordered stretch occupies residues 696-726; that stretch reads NESGGSEIKDIGSKYSEQSKETNGSEPLGVF. Position 735 is a phosphoserine (S735). Positions 844-1032 constitute a Reticulon domain; the sequence is VHDLIFWRDV…LPGIAKKKAE (189 aa). Positions 864–887 form an intramembrane region, helical; the sequence is LIMLLSLAAFSVISVVSYLILALL. The Cytoplasmic portion of the chain corresponds to 888–947; the sequence is SVTISFRIYKSVIQAVQKSEEGHPFKAYLDVDITLSSEAFHNYMNAAMVHINRALKLIIR. Residues 948–968 constitute an intramembrane region (helical); the sequence is LFLVEDLVDSLKLAVFMWLMT. At 969–972 the chain is on the cytoplasmic side; the sequence is YVGA. An intramembrane region (helical) is located at residues 973–993; that stretch reads VFNGITLLILAELLIFSVPIV. The segment at 987-1032 is interaction with FADD; sequence IFSVPIVYEKYKTQIDHYVGIARDQTKSIVEKIQAKLPGIAKKKAE. The Cytoplasmic portion of the chain corresponds to 994–1032; it reads YEKYKTQIDHYVGIARDQTKSIVEKIQAKLPGIAKKKAE. The segment at 1000–1002 is interaction with BACE1; the sequence is QID.

Homodimer. Interacts with ATL1. Interacts with RTN4. Isoform 3 interacts with BACE1, BACE2, BCL2 and FADD. Interacts with ATL2. Interacts with TMEM33. Interacts with ZFYVE27 and with KIF5A in a ZFYVE27-dependent manner. Interacts with RIGI. Interacts with TRIM25. In terms of assembly, (Microbial infection) Interacts with Coxsackievirus A16, enterovirus 71 and poliovirus P2C proteins. As to quaternary structure, (Microbial infection) Interacts with West Nile virus protein NS4A. As to expression, isoform 3 is widely expressed, with highest levels in brain, where it is enriched in neuronal cell bodies from gray matter (at protein level). Three times more abundant in macula than in peripheral retina. Isoform 1 is expressed at high levels in brain and at low levels in skeletal muscle. Isoform 2 is only found in melanoma.

It is found in the endoplasmic reticulum membrane. Its subcellular location is the golgi apparatus membrane. Functionally, may be involved in membrane trafficking in the early secretory pathway. Inhibits BACE1 activity and amyloid precursor protein processing. May induce caspase-8 cascade and apoptosis. May favor BCL2 translocation to the mitochondria upon endoplasmic reticulum stress. Induces the formation of endoplasmic reticulum tubules. Also acts as an inflammation-resolving regulator by interacting with both TRIM25 and RIGI, subsequently impairing RIGI 'Lys-63'-linked polyubiquitination leading to IRF3 and NF-kappa-B inhibition. In terms of biological role, (Microbial infection) Plays a positive role in viral replication and pathogenesis of enteroviruses. This Homo sapiens (Human) protein is Reticulon-3 (RTN3).